The primary structure comprises 308 residues: Ribonuclease HIII (308 aa).

The region spanning 93–308 (MSVLGSDETG…ANTEKARKMI (216 aa)) is the RNase H type-2 domain. A divalent metal cation contacts are provided by Asp99, Glu100, and Asp204.

This sequence belongs to the RNase HII family. RnhC subfamily. Requires Mn(2+) as cofactor. The cofactor is Mg(2+).

The protein resides in the cytoplasm. The catalysed reaction is Endonucleolytic cleavage to 5'-phosphomonoester.. Its function is as follows. Endonuclease that specifically degrades the RNA of RNA-DNA hybrids. This Lysinibacillus sphaericus (strain C3-41) protein is Ribonuclease HIII.